The chain runs to 229 residues: DNA polymerase III subunit epsilon (229 aa).

A divalent metal cation-binding residues include Asp10 and Glu12. Substrate is bound by residues Asp10, Glu12, Glu55, and His60. His156 serves as the catalytic Proton acceptor. A divalent metal cation is bound at residue Asp161. Asp161 contributes to the substrate binding site.

As to quaternary structure, DNA polymerase III contains a core (composed of alpha, epsilon and theta chains) that associates with a tau subunit. This core dimerizes to form the POLIII' complex. PolIII' associates with the gamma complex (composed of gamma, delta, delta', psi and chi chains) and with the beta chain to form the complete DNA polymerase III complex. It depends on Mg(2+) as a cofactor. The cofactor is Mn(2+).

The enzyme catalyses DNA(n) + a 2'-deoxyribonucleoside 5'-triphosphate = DNA(n+1) + diphosphate. DNA polymerase III is a complex, multichain enzyme responsible for most of the replicative synthesis in bacteria. The epsilon subunit contain the editing function and is a proofreading 3'-5' exonuclease. The polypeptide is DNA polymerase III subunit epsilon (dnaQ) (Rickettsia prowazekii (strain Madrid E)).